We begin with the raw amino-acid sequence, 603 residues long: DNA mismatch repair protein MutL (603 aa).

The disordered stretch occupies residues 361 to 383 (KETPTLFSKPTIPEYVPSDEDAP).

It belongs to the DNA mismatch repair MutL/HexB family.

Its function is as follows. This protein is involved in the repair of mismatches in DNA. It is required for dam-dependent methyl-directed DNA mismatch repair. May act as a 'molecular matchmaker', a protein that promotes the formation of a stable complex between two or more DNA-binding proteins in an ATP-dependent manner without itself being part of a final effector complex. In Listeria monocytogenes serotype 4b (strain CLIP80459), this protein is DNA mismatch repair protein MutL.